Reading from the N-terminus, the 727-residue chain is Procollagen-lysine,2-oxoglutarate 5-dioxygenase 1 (727 aa).

The first 18 residues, M1–A18, serve as a signal peptide directing secretion. Residues N163, N197, and N538 are each glycosylated (N-linked (GlcNAc...) asparagine). In terms of domain architecture, Fe2OG dioxygenase spans Q636–P727. Residues H656 and D658 each contribute to the Fe cation site. N-linked (GlcNAc...) asparagine glycosylation occurs at N686. A Fe cation-binding site is contributed by H708. Residue R718 is part of the active site.

As to quaternary structure, homodimer. Identified in a complex with P3H3 and P3H4. Fe(2+) is required as a cofactor. It depends on L-ascorbate as a cofactor.

It is found in the rough endoplasmic reticulum membrane. It carries out the reaction L-lysyl-[collagen] + 2-oxoglutarate + O2 = (5R)-5-hydroxy-L-lysyl-[collagen] + succinate + CO2. Functionally, part of a complex composed of PLOD1, P3H3 and P3H4 that catalyzes hydroxylation of lysine residues in collagen alpha chains and is required for normal assembly and cross-linkling of collagen fibrils. Forms hydroxylysine residues in -Xaa-Lys-Gly- sequences in collagens. These hydroxylysines serve as sites of attachment for carbohydrate units and are essential for the stability of the intermolecular collagen cross-links. This is Procollagen-lysine,2-oxoglutarate 5-dioxygenase 1 (PLOD1) from Pongo abelii (Sumatran orangutan).